Here is a 115-residue protein sequence, read N- to C-terminus: Variant surface glycoprotein ANTAT 1.8 (115 aa).

N-linked (GlcNAc...) asparagine glycosylation occurs at Asn42. Asp92 carries the GPI-anchor amidated aspartate lipid modification. Positions 93-115 (SSILVNKQLALSVVSAAFAALLF) are cleaved as a propeptide — removed in mature form.

It is found in the cell membrane. Functionally, VSG forms a coat on the surface of the parasite. The trypanosome evades the immune response of the host by expressing a series of antigenically distinct VSGs from an estimated 1000 VSG genes. In Trypanosoma brucei brucei, this protein is Variant surface glycoprotein ANTAT 1.8.